The sequence spans 363 residues: MEIGVFIPIGNNGWLLSENAPQYKPSFELNKEITLKAEKYGFDFVLSMIKLRGFGGKTEFWDHNLESFTLMSGLAAVTTRIKLFATAATLVMPPAIVARMASTIDSISNGRFGLNLVTGWQRPEYSQMGMWPGDEYFAKRYDYLGEYATVLRDLWETGKSDLKGEFFQMDDCRLSPRPQADMKVICAGSSTAGMEFSAQYADYNFCFGVGVNTPKAFAPAAERLQVATAKTGRDVSSFVLFMVIADETDEAARAKWESYKDGADQEAIAWLGVQGAADTKSGSDTNIRQMADSVSAVNINMGTLVGSYETIAKLLDEVPTVPGTGGVLLTFDDFVKGVEDFGTKIQPLMKCREHIKPMLEAAE.

Residues 49–50, Asn115, Glu124, 140–141, and Ser190 each bind FMN; these read IK and RY.

Belongs to the NtaA/SnaA/DszA monooxygenase family. RutA subfamily.

It catalyses the reaction uracil + FMNH2 + NADH + O2 = (Z)-3-ureidoacrylate + FMN + NAD(+) + H2O + H(+). The enzyme catalyses thymine + FMNH2 + NADH + O2 = (Z)-2-methylureidoacrylate + FMN + NAD(+) + H2O + H(+). Its function is as follows. Catalyzes the pyrimidine ring opening between N-3 and C-4 by an unusual flavin hydroperoxide-catalyzed mechanism, adding oxygen atoms in the process to yield ureidoacrylate peracid, that immediately reacts with FMN forming ureidoacrylate and FMN-N(5)-oxide. The FMN-N(5)-oxide reacts spontaneously with NADH to produce FMN. Requires the flavin reductase RutF to regenerate FMN in vivo. This is Pyrimidine monooxygenase RutA from Rhizobium rhizogenes (strain K84 / ATCC BAA-868) (Agrobacterium radiobacter).